The primary structure comprises 394 residues: General receptor for phosphoinositides 1-associated scaffold protein (394 aa).

A disordered region spans residues 1-51 (MTLRRLRKLQQKEEATAAPDLAGRAPDSEAARAAPTPSGPPAAAAPPGAPG). A compositionally biased stretch (pro residues) spans 37-49 (PSGPPAAAAPPGA). A Phosphothreonine modification is found at T76. S93 carries the phosphoserine modification. The region spanning 100-189 (VLTLEKGDNQ…VLRLETLYGT (90 aa)) is the PDZ domain. Residues 180 to 257 (VLRLETLYGT…GAGLLPGSLP (78 aa)) are interaction with PSCD3. A Phosphotyrosine modification is found at Y236. R269 is subject to Omega-N-methylarginine. The disordered stretch occupies residues 293–318 (EPQALPPPPPPARAPGPGSAETPASV). Residues 296 to 306 (ALPPPPPPARA) show a composition bias toward pro residues. At S386 the chain carries Phosphoserine.

As to quaternary structure, heteromer. Composed of TAMALIN, CYTH2 and at least one GRM1. Also interacts with CYTH3, GRM2, GRM3 and GRM5. In terms of tissue distribution, expressed in brain.

The protein localises to the cytoplasm. The protein resides in the perinuclear region. It is found in the cell membrane. It localises to the postsynaptic cell membrane. In terms of biological role, plays a role in intracellular trafficking and contributes to the macromolecular organization of group 1 metabotropic glutamate receptors (mGluRs) at synapses. In Rattus norvegicus (Rat), this protein is General receptor for phosphoinositides 1-associated scaffold protein.